Consider the following 1392-residue polypeptide: DNA-directed RNA polymerase subunit beta (1392 aa).

The protein belongs to the RNA polymerase beta chain family. In terms of assembly, the RNAP catalytic core consists of 2 alpha, 1 beta, 1 beta' and 1 omega subunit. When a sigma factor is associated with the core the holoenzyme is formed, which can initiate transcription.

The enzyme catalyses RNA(n) + a ribonucleoside 5'-triphosphate = RNA(n+1) + diphosphate. Its function is as follows. DNA-dependent RNA polymerase catalyzes the transcription of DNA into RNA using the four ribonucleoside triphosphates as substrates. The chain is DNA-directed RNA polymerase subunit beta from Neisseria gonorrhoeae (strain NCCP11945).